A 154-amino-acid polypeptide reads, in one-letter code: MAKEGIKLIANNKKARFDYFIEETYEAGVVLHGTEVKSLRMGKCSIKESFMRIENGEVYVYNMHISPYEKGNIFNKDPLRVKKLLLHKFQINKIVGQIQQKGYTLVPLTIYLKDSLVKMEIGVARGKKLYDKRQDIAKKDQKREAEKDFKVKNL.

It belongs to the SmpB family.

Its subcellular location is the cytoplasm. In terms of biological role, required for rescue of stalled ribosomes mediated by trans-translation. Binds to transfer-messenger RNA (tmRNA), required for stable association of tmRNA with ribosomes. tmRNA and SmpB together mimic tRNA shape, replacing the anticodon stem-loop with SmpB. tmRNA is encoded by the ssrA gene; the 2 termini fold to resemble tRNA(Ala) and it encodes a 'tag peptide', a short internal open reading frame. During trans-translation Ala-aminoacylated tmRNA acts like a tRNA, entering the A-site of stalled ribosomes, displacing the stalled mRNA. The ribosome then switches to translate the ORF on the tmRNA; the nascent peptide is terminated with the 'tag peptide' encoded by the tmRNA and targeted for degradation. The ribosome is freed to recommence translation, which seems to be the essential function of trans-translation. This is SsrA-binding protein from Lachnoclostridium phytofermentans (strain ATCC 700394 / DSM 18823 / ISDg) (Clostridium phytofermentans).